We begin with the raw amino-acid sequence, 193 residues long: dCTP deaminase (193 aa).

Residues 110–115, Asp-128, 136–138, Tyr-171, Lys-178, and Gln-182 contribute to the dCTP site; these read RSSLAR and VLE. Glu-138 serves as the catalytic Proton donor/acceptor. The interval 169 to 193 is disordered; sequence RPYNRRQDAKYRDQQGAVASRIDKD.

Belongs to the dCTP deaminase family. Homotrimer.

It carries out the reaction dCTP + H2O + H(+) = dUTP + NH4(+). Its pathway is pyrimidine metabolism; dUMP biosynthesis; dUMP from dCTP (dUTP route): step 1/2. Functionally, catalyzes the deamination of dCTP to dUTP. The polypeptide is dCTP deaminase (Salmonella paratyphi B (strain ATCC BAA-1250 / SPB7)).